A 118-amino-acid polypeptide reads, in one-letter code: Small ribosomal subunit protein uS13 (118 aa).

Positions 92-118 (RRGLPVRGQRTKTNARTRKGPRKPIKK) are disordered.

This sequence belongs to the universal ribosomal protein uS13 family. As to quaternary structure, part of the 30S ribosomal subunit. Forms a loose heterodimer with protein S19. Forms two bridges to the 50S subunit in the 70S ribosome.

In terms of biological role, located at the top of the head of the 30S subunit, it contacts several helices of the 16S rRNA. In the 70S ribosome it contacts the 23S rRNA (bridge B1a) and protein L5 of the 50S subunit (bridge B1b), connecting the 2 subunits; these bridges are implicated in subunit movement. Contacts the tRNAs in the A and P-sites. The sequence is that of Small ribosomal subunit protein uS13 from Yersinia pestis.